The chain runs to 276 residues: Orotidine 5'-phosphate decarboxylase (276 aa).

Substrate-binding positions include Asp-40, 62 to 64 (KTH), 93 to 102 (DRKFIDIGNT), Tyr-228, and Arg-246. Residue Lys-95 is the Proton donor of the active site.

Belongs to the OMP decarboxylase family.

The enzyme catalyses orotidine 5'-phosphate + H(+) = UMP + CO2. It functions in the pathway pyrimidine metabolism; UMP biosynthesis via de novo pathway; UMP from orotate: step 2/2. The protein is Orotidine 5'-phosphate decarboxylase (pyrG) of Penicillium nalgiovense.